The sequence spans 428 residues: AP-1 complex subunit mu-2 (428 aa).

The MHD domain maps to 170-426 (KNEVFLDVIE…ITMAGEYELR (257 aa)).

It belongs to the adaptor complexes medium subunit family. Adaptor protein complex 1 (AP-1) is a heterotetramer composed of two large adaptins (gamma-type subunit and beta-type subunit), a medium adaptin (mu-type subunit) and a small adaptin (sigma-type subunit). As to expression, ubiquitous.

It is found in the golgi apparatus. It localises to the trans-Golgi network membrane. Its subcellular location is the early endosome membrane. The protein localises to the cytoplasmic vesicle. The protein resides in the clathrin-coated vesicle membrane. Subunit of clathrin-associated adaptor protein complex 1 that plays a role in protein sorting at the trans-Golgi network and early endosomes (TGN/EE). The AP complexes mediate the recruitment of clathrin to membranes and the recognition of sorting signals within the cytosolic tails of transmembrane cargo molecules. Required for KNOLLE localization at the cell plate to mediate cytokinesis. Functions redundantly with AP1M1 in multiple post-Golgi trafficking pathways leading from the TGN to the vacuole, the plasma membrane, and the cell-division plane. This Arabidopsis thaliana (Mouse-ear cress) protein is AP-1 complex subunit mu-2 (AP1M2).